A 139-amino-acid polypeptide reads, in one-letter code: ATP synthase epsilon chain (139 aa).

This sequence belongs to the ATPase epsilon chain family. F-type ATPases have 2 components, CF(1) - the catalytic core - and CF(0) - the membrane proton channel. CF(1) has five subunits: alpha(3), beta(3), gamma(1), delta(1), epsilon(1). CF(0) has three main subunits: a, b and c.

The protein localises to the cell inner membrane. Produces ATP from ADP in the presence of a proton gradient across the membrane. This is ATP synthase epsilon chain (atpC) from Escherichia coli O157:H7.